The primary structure comprises 129 residues: Small ribosomal subunit protein uS11 (129 aa).

Belongs to the universal ribosomal protein uS11 family. In terms of assembly, part of the 30S ribosomal subunit. Interacts with proteins S7 and S18. Binds to IF-3.

Its function is as follows. Located on the platform of the 30S subunit, it bridges several disparate RNA helices of the 16S rRNA. Forms part of the Shine-Dalgarno cleft in the 70S ribosome. This chain is Small ribosomal subunit protein uS11, found in Caulobacter sp. (strain K31).